Consider the following 313-residue polypeptide: Pyrimidine-specific ribonucleoside hydrolase RihB (313 aa).

Asp-11 (proton acceptor) is an active-site residue. Positions 11, 16, and 124 each coordinate Ca(2+). Gln-227 and His-239 together coordinate substrate. Asp-240 lines the Ca(2+) pocket.

This sequence belongs to the IUNH family. RihB subfamily. Homotetramer. Ca(2+) serves as cofactor.

The enzyme catalyses a pyrimidine ribonucleoside + H2O = a pyrimidine nucleobase + D-ribose. Its function is as follows. Hydrolyzes cytidine or uridine to ribose and cytosine or uracil, respectively. Has a clear preference for cytidine over uridine. Strictly specific for ribonucleosides. In Escherichia coli O9:H4 (strain HS), this protein is Pyrimidine-specific ribonucleoside hydrolase RihB.